The sequence spans 674 residues: Sterile alpha motif domain-containing protein 15 (674 aa).

Residues 1–18 show a composition bias toward acidic residues; the sequence is MAEVPEDYDSGPDEDGEL. The tract at residues 1-448 is disordered; the sequence is MAEVPEDYDS…LEHREPKRGK (448 aa). Composition is skewed to basic and acidic residues over residues 87–142, 195–223, and 236–274; these read IAKE…EEAK, ESLRVQHEETGLEPPEQTKQDFPSEKLGE, and TKPETPEETQRESTEKKRTEPPEQARLEFLEKEPRKSSE. Over residues 276–290 the composition is skewed to acidic residues; the sequence is AGLEPPEETQPEVPE. Basic and acidic residues-rich tracts occupy residues 291–322, 330–346, 354–372, and 391–429; these read EMQRKATEEKGTELPERTKPDFPDHKPRKSTD, EEIKLEFPEEESRKTNE, EMMKPESPEEIRKSNEKKN, and VEEKTQTKPTEKILELPDETKPRETHVEFSKEDRPEPIK. One can recognise an SAM domain in the interval 545–608; that stretch reads WDPEEVAEWI…SRHTQELLEI (64 aa).

This Homo sapiens (Human) protein is Sterile alpha motif domain-containing protein 15 (SAMD15).